Reading from the N-terminus, the 321-residue chain is Phospho-N-acetylmuramoyl-pentapeptide-transferase (321 aa).

The next 10 membrane-spanning stretches (helical) occupy residues 1 to 21 (MIYV…PILI), 49 to 69 (TMGG…AIIF), 77 to 97 (ILLL…DYII), 112 to 132 (FLAQ…FNMI), 140 to 160 (IPFT…IVFW), 176 to 196 (GLAT…SFML), 200 to 220 (AVGT…IYNV), 225 to 245 (VFMG…VSIM), 250 to 270 (ISLI…ILQV), and 300 to 320 (VVSV…WIGV).

It belongs to the glycosyltransferase 4 family. MraY subfamily. Mg(2+) serves as cofactor.

Its subcellular location is the cell membrane. It catalyses the reaction UDP-N-acetyl-alpha-D-muramoyl-L-alanyl-gamma-D-glutamyl-L-lysyl-D-alanyl-D-alanine + di-trans,octa-cis-undecaprenyl phosphate = Mur2Ac(oyl-L-Ala-gamma-D-Glu-L-Lys-D-Ala-D-Ala)-di-trans,octa-cis-undecaprenyl diphosphate + UMP. It functions in the pathway cell wall biogenesis; peptidoglycan biosynthesis. Its function is as follows. Catalyzes the initial step of the lipid cycle reactions in the biosynthesis of the cell wall peptidoglycan: transfers peptidoglycan precursor phospho-MurNAc-pentapeptide from UDP-MurNAc-pentapeptide onto the lipid carrier undecaprenyl phosphate, yielding undecaprenyl-pyrophosphoryl-MurNAc-pentapeptide, known as lipid I. The chain is Phospho-N-acetylmuramoyl-pentapeptide-transferase from Staphylococcus carnosus (strain TM300).